A 214-amino-acid chain; its full sequence is Single-pass membrane and coiled-coil domain-containing protein 1 (214 aa).

Residues 5 to 40 (TTTLISLKEAMKRVDNKLRALDTQFKELDVTKDNLT) are a coiled coil. A helical membrane pass occupies residues 59–81 (IWTAALALGFTSMELNIVYSYVI). The segment at 193–214 (KQAQDPENSRAPLKELMPPVKD) is disordered.

It localises to the membrane. The chain is Single-pass membrane and coiled-coil domain-containing protein 1 (Smco1) from Mus musculus (Mouse).